A 233-amino-acid polypeptide reads, in one-letter code: Small ribosomal subunit protein uS5 (233 aa).

Over residues 1 to 13 (MAEETQNTVATES) the composition is skewed to polar residues. A disordered region spans residues 1–40 (MAEETQNTVATESNNEDRKGRRGQRGEGRRGERRNRREEN). Basic and acidic residues predominate over residues 15–40 (NEDRKGRRGQRGEGRRGERRNRREEN). The 64-residue stretch at 45–108 (LLDRVVTINR…LDAKKHMFSV (64 aa)) folds into the S5 DRBM domain.

The protein belongs to the universal ribosomal protein uS5 family. As to quaternary structure, part of the 30S ribosomal subunit. Contacts proteins S4 and S8.

Functionally, with S4 and S12 plays an important role in translational accuracy. Its function is as follows. Located at the back of the 30S subunit body where it stabilizes the conformation of the head with respect to the body. This Bifidobacterium longum (strain NCC 2705) protein is Small ribosomal subunit protein uS5.